The primary structure comprises 491 residues: MSNILRRGRLEAAQDEEILRYTSSMEADRWIFNADIVVDLAHTVMLREQGIIKEEDCSKILSGLLKIREEGMEKLDFSYEDIHISLESRLIDMVGEDVGGRMHSGRSRNDEVATCIRLTLREELLGLLEEIFALRKTLVSLAEKHSETLMPGFTHLQHAQPTTLAHHLCAHESALGRDFDRVQDAFSRVNLCPLGAAAFASTGFNLNRKRTQELLGFEGLLENSMDAVSSRDFLIECASVFSNLMINLSRIAEELVIWSSSEFNFIELDDMYASTSSIMPQKKNPDTAELMRGKTGVSVGALMSLLTICKGLPLSYNRDLQEATPNIWRSVETVRASVRVMEGMVKTMKVHPDVLAAESITGFTTATELADTFVRETGIPFRTAHQIVGMLAKEREKPTMEKIDSASEVVLGESLSSKGLTENMVKEALNPESNIKRRKIPGGPAPEEMKNYLSKRKTELELNAQEIATLKDIIDSAFENLLSVVEEYRKI.

Belongs to the lyase 1 family. Argininosuccinate lyase subfamily.

It localises to the cytoplasm. It carries out the reaction 2-(N(omega)-L-arginino)succinate = fumarate + L-arginine. It participates in amino-acid biosynthesis; L-arginine biosynthesis; L-arginine from L-ornithine and carbamoyl phosphate: step 3/3. The protein is Argininosuccinate lyase of Methanosarcina mazei (strain ATCC BAA-159 / DSM 3647 / Goe1 / Go1 / JCM 11833 / OCM 88) (Methanosarcina frisia).